The primary structure comprises 101 residues: Large ribosomal subunit protein uL23 (101 aa).

Belongs to the universal ribosomal protein uL23 family. In terms of assembly, part of the 50S ribosomal subunit. Contacts protein L29, and trigger factor when it is bound to the ribosome.

In terms of biological role, one of the early assembly proteins it binds 23S rRNA. One of the proteins that surrounds the polypeptide exit tunnel on the outside of the ribosome. Forms the main docking site for trigger factor binding to the ribosome. In Wigglesworthia glossinidia brevipalpis, this protein is Large ribosomal subunit protein uL23.